Here is a 607-residue protein sequence, read N- to C-terminus: MNKEERAKRQSKIRNFSIIAHIDHGKSTLADRILEKTNALTQREMKAQLLDSMDLERERGITIKLNAVQLNYKAKDGEEYILHLIDTPGHVDFTYEVSRSLAACEGAILVVDAAQGIEAQTLANVYLALDNNLEILPVINKIDLPSADPERVRQEVEDVIGLDASEAVLASAKAGIGIEEILEQIVEKVPAPAGDSEEPLQCMIFDSLYDPYRGVIAYIRVVNGTVKVGDKVRMMATGKEFEVTEVGVFTPKTTQRDELTVGDVGFLAASIKNVGDTRVGDTITHAKRPAAEPLAGYRKLNPMVFCGLYPIDSARYNDLRDALEKLELNDSALEFEPETSQALGFGFRCGFLGLLHMEIIQERIEREFKIDLITTAPSVIYKVYLTNGEDVIVDNPSNMPDPQSIDRVEEPFVKASIMVPNDYVGAVMEICQGKRGTFIDMQYLDETRVTLTYEIPLSEIVYDFFDQLKSNTKGYASFDYELIGYKPSKLVKMDILLNNEQVDALSFIVHRDSAYDRGKVIVEKLKELIPRQQFEVPIQATIGNKVVARSTIKAMRKNVLAKCYGGDISRKRKLLDKQKEGKKRMKSVGSVEVPQEAFMAVLKMDDN.

A tr-type G domain is found at 11–193 (SKIRNFSIIA…QIVEKVPAPA (183 aa)). GTP contacts are provided by residues 23–28 (DHGKST) and 140–143 (NKID).

Belongs to the TRAFAC class translation factor GTPase superfamily. Classic translation factor GTPase family. LepA subfamily.

It localises to the cell membrane. The catalysed reaction is GTP + H2O = GDP + phosphate + H(+). In terms of biological role, required for accurate and efficient protein synthesis under certain stress conditions. May act as a fidelity factor of the translation reaction, by catalyzing a one-codon backward translocation of tRNAs on improperly translocated ribosomes. Back-translocation proceeds from a post-translocation (POST) complex to a pre-translocation (PRE) complex, thus giving elongation factor G a second chance to translocate the tRNAs correctly. Binds to ribosomes in a GTP-dependent manner. This is Elongation factor 4 from Bacillus cereus (strain B4264).